We begin with the raw amino-acid sequence, 236 residues long: MLSSLLRRLSRALLWFAAGSIAVVLVLRWVPPPGTALMVERKVESWFNGEPIDLQRDWTPWEDISDELKVAVIAGEDQKFASHWGFDIPAIQAALAYNERGGKVRGASTLTQQVAKNMFLWSGRSWLRKGLEAWFTALIELFWSKERILEVYLNSAEWGKGVFGAQAAARYHFGVDASRLSRQQAAQLAAVLPSPIKWSASRPSAYVASRAGWIRRQMSQLGGPSYLMQLDASRKL.

A helical membrane pass occupies residues 12-31 (ALLWFAAGSIAVVLVLRWVP).

Belongs to the glycosyltransferase 51 family.

Its subcellular location is the cell inner membrane. It catalyses the reaction [GlcNAc-(1-&gt;4)-Mur2Ac(oyl-L-Ala-gamma-D-Glu-L-Lys-D-Ala-D-Ala)](n)-di-trans,octa-cis-undecaprenyl diphosphate + beta-D-GlcNAc-(1-&gt;4)-Mur2Ac(oyl-L-Ala-gamma-D-Glu-L-Lys-D-Ala-D-Ala)-di-trans,octa-cis-undecaprenyl diphosphate = [GlcNAc-(1-&gt;4)-Mur2Ac(oyl-L-Ala-gamma-D-Glu-L-Lys-D-Ala-D-Ala)](n+1)-di-trans,octa-cis-undecaprenyl diphosphate + di-trans,octa-cis-undecaprenyl diphosphate + H(+). The protein operates within cell wall biogenesis; peptidoglycan biosynthesis. In terms of biological role, peptidoglycan polymerase that catalyzes glycan chain elongation from lipid-linked precursors. This Pseudomonas entomophila (strain L48) protein is Biosynthetic peptidoglycan transglycosylase.